A 159-amino-acid chain; its full sequence is uncharacterized protein (159 aa).

The first 20 residues, 1–20 (MKKIIAMSLLMFSVVMSVNA), serve as a signal peptide directing secretion.

This is an uncharacterized protein from Pasteurella multocida (strain Pm70).